The sequence spans 428 residues: UDP-N-acetylglucosamine 1-carboxyvinyltransferase (428 aa).

25 to 26 serves as a coordination point for phosphoenolpyruvate; that stretch reads KN. Arg102 is a UDP-N-acetyl-alpha-D-glucosamine binding site. The Proton donor role is filled by Cys126. Cys126 is modified (2-(S-cysteinyl)pyruvic acid O-phosphothioketal). 2 residues coordinate UDP-N-acetyl-alpha-D-glucosamine: Asp316 and Val338.

The protein belongs to the EPSP synthase family. MurA subfamily.

The protein resides in the cytoplasm. It catalyses the reaction phosphoenolpyruvate + UDP-N-acetyl-alpha-D-glucosamine = UDP-N-acetyl-3-O-(1-carboxyvinyl)-alpha-D-glucosamine + phosphate. Its pathway is cell wall biogenesis; peptidoglycan biosynthesis. Functionally, cell wall formation. Adds enolpyruvyl to UDP-N-acetylglucosamine. The protein is UDP-N-acetylglucosamine 1-carboxyvinyltransferase of Anaplasma marginale (strain St. Maries).